The sequence spans 1357 residues: Major yolk protein (1357 aa).

A signal peptide spans 1–15 (MRAAILFCLVASSMA). Transferrin-like domains follow at residues 132–478 (VRWC…GEVY) and 493–1101 (AKIC…AIVK). Residues Asn-198, Asn-227, Asn-304, Asn-310, Asn-402, Asn-499, Asn-530, Asn-541, Asn-572, Asn-578, Asn-625, Asn-639, Asn-692, Asn-732, Asn-741, Asn-1035, Asn-1043, Asn-1081, Asn-1128, Asn-1208, Asn-1241, and Asn-1258 are each glycosylated (N-linked (GlcNAc...) asparagine).

It belongs to the transferrin family. As to expression, synthesized in the intestines of the females and males and also in ovaries and testis.

The protein resides in the secreted. In terms of biological role, may serve the following two functions: a classical role as a yolk protein precursor and probably shuttle iron to developing germ cells. The polypeptide is Major yolk protein (Strongylocentrotus purpuratus (Purple sea urchin)).